The following is a 777-amino-acid chain: Myotubularin-related protein 10 (777 aa).

Positions proline 196 to lysine 217 are disordered. The span at serine 197 to serine 214 shows a compositional bias: gly residues. The 441-residue stretch at phenylalanine 221–tyrosine 661 folds into the Myotubularin phosphatase domain. 2 positions are modified to phosphoserine: serine 607 and serine 751.

Belongs to the protein-tyrosine phosphatase family. Non-receptor class myotubularin subfamily.

The chain is Myotubularin-related protein 10 (MTMR10) from Homo sapiens (Human).